A 249-amino-acid chain; its full sequence is Ribosomal RNA small subunit methyltransferase G (249 aa).

Glycine 86, phenylalanine 91, and arginine 178 together coordinate S-adenosyl-L-methionine.

The protein belongs to the methyltransferase superfamily. RNA methyltransferase RsmG family.

It localises to the cytoplasm. Specifically methylates the N7 position of a guanine in 16S rRNA. This is Ribosomal RNA small subunit methyltransferase G from Bifidobacterium adolescentis (strain ATCC 15703 / DSM 20083 / NCTC 11814 / E194a).